The sequence spans 672 residues: UvrABC system protein B (672 aa).

A Helicase ATP-binding domain is found at 26-183; it reads EGLEDGLAHQ…RRLSELQYVR (158 aa). 39–46 contributes to the ATP binding site; that stretch reads GVTGSGKT. The Beta-hairpin motif lies at 92 to 115; sequence YYDYYQPEAYVPSSDTFIEKDASV. The 167-residue stretch at 431-597 folds into the Helicase C-terminal domain; it reads QVDDLLSEIN…ALNKKVTDIL (167 aa). A disordered region spans residues 601-623; sequence DGPVRSRTKGARGQRAAEPHPDY. In terms of domain architecture, UVR spans 632-667; that stretch reads EQQIQRLETQMYQHAQNLEFEQAAALRDEIHILREQ.

The protein belongs to the UvrB family. As to quaternary structure, forms a heterotetramer with UvrA during the search for lesions. Interacts with UvrC in an incision complex.

The protein resides in the cytoplasm. In terms of biological role, the UvrABC repair system catalyzes the recognition and processing of DNA lesions. A damage recognition complex composed of 2 UvrA and 2 UvrB subunits scans DNA for abnormalities. Upon binding of the UvrA(2)B(2) complex to a putative damaged site, the DNA wraps around one UvrB monomer. DNA wrap is dependent on ATP binding by UvrB and probably causes local melting of the DNA helix, facilitating insertion of UvrB beta-hairpin between the DNA strands. Then UvrB probes one DNA strand for the presence of a lesion. If a lesion is found the UvrA subunits dissociate and the UvrB-DNA preincision complex is formed. This complex is subsequently bound by UvrC and the second UvrB is released. If no lesion is found, the DNA wraps around the other UvrB subunit that will check the other stand for damage. The sequence is that of UvrABC system protein B from Edwardsiella ictaluri (strain 93-146).